Consider the following 388-residue polypeptide: Subtilisin-like serine protease AsES (388 aa).

The first 15 residues, 1–15 (MRLSLVLALLPVAFG), serve as a signal peptide directing secretion. The propeptide at 16-105 (APTRRDEPAP…IEQDAIVTLA (90 aa)) is removed in mature form. The 275-residue stretch at 114–388 (PWGLARISTR…RLAFNGNPSG (275 aa)) folds into the Peptidase S8 domain. A disulfide bond links Cys-141 and Cys-230. Active-site charge relay system residues include Asp-146 and His-176. N-linked (GlcNAc...) asparagine glycosylation is found at Asn-232 and Asn-237. The cysteines at positions 285 and 357 are disulfide-linked. Catalysis depends on Ser-331, which acts as the Charge relay system.

Belongs to the peptidase S8 family.

It localises to the secreted. With respect to regulation, the elicitor proteolytic activity is completely inhibited by PMSF. The activity is also significantly reduced by aprotinin (leading to 37% residual activity), by leupeptin (leading to 54% residual activity), by the ovomucoid trypsin inhibitor (leading to 65% residual activity), and by p-aminobenzamidine (leading to 26% residual activity). Extracellular elicitor protein that induces a strong defense response in strawberry and confers both local and systemic plant resistance against the fungal pathogen Colletotricum acutatum, the casual agent of anthracnose disease. AsES activates a cascade of defense responses, including calcium influx, oxidative burst, hypersensitive cell-death response (HR), accumulation of autofluorescent compounds, cell-wall reinforcement with callose and lignin deposition, salicylic acid accumulation, and expression of defense-related genes, such as PR1, PG1, MYB30, RBOH-D, RBOH-F, CHI23, and FLS. The oxidative burst consists in a progressive extracellular accumulation of H(2)O(2) that starts immediately after the contact with AsES and is preceded by a rapid and transient cell membrane depolarization. During this phase takes place also a rapid intracellular accumulation of NO at the chloroplasts. After the first extracellular H(2)O(2) production phase, two intracellular H(2)O(2) accumulation events occur, the first 2 hours after induction, and the second 7 hours after induction. AsES also produces a transient increase of ion leakage, and a progressive alkalinization of the extracellular medium. Confers also local and systemic plant resistance against Botrytis cinerea in Arabidopsis thaliana. Systemic, but not local resistance is dependent on the length of exposure to AsES. The protection to B.cinerea is due to the induction of the plant defenses via the salicylic acid, jasmonic acid and ethylene signaling pathways. Exhibits subtilisin-like proteolytic activity which is necessary but not sufficient for its elicitor function in strawberry plants. Probably induces defense by means of proteolysis of one or multiple host proteins that are specific targets of this protease. In Sarocladium strictum (Black bundle disease fungus), this protein is Subtilisin-like serine protease AsES.